A 513-amino-acid chain; its full sequence is Sterol 14-alpha demethylase rstn2 (513 aa).

A helical membrane pass occupies residues 3–23; it reads WPLIGAYALLAFVAIIALNVT. Heme is bound at residue Cys-453.

This sequence belongs to the cytochrome P450 family. Requires heme as cofactor.

The protein localises to the membrane. It carries out the reaction a 14alpha-methyl steroid + 3 reduced [NADPH--hemoprotein reductase] + 3 O2 = a Delta(14) steroid + formate + 3 oxidized [NADPH--hemoprotein reductase] + 4 H2O + 4 H(+). It catalyses the reaction a 14alpha-methyl steroid + reduced [NADPH--hemoprotein reductase] + O2 = a 14alpha-hydroxymethyl steroid + oxidized [NADPH--hemoprotein reductase] + H2O + H(+). The enzyme catalyses a 14alpha-hydroxymethyl steroid + reduced [NADPH--hemoprotein reductase] + O2 = a 14alpha-formyl steroid + oxidized [NADPH--hemoprotein reductase] + 2 H2O + H(+). The catalysed reaction is a 14alpha-formyl steroid + reduced [NADPH--hemoprotein reductase] + O2 = a Delta(14) steroid + formate + oxidized [NADPH--hemoprotein reductase] + H2O + 2 H(+). It carries out the reaction lanosterol + 3 reduced [NADPH--hemoprotein reductase] + 3 O2 = 4,4-dimethyl-5alpha-cholesta-8,14,24-trien-3beta-ol + formate + 3 oxidized [NADPH--hemoprotein reductase] + 4 H2O + 4 H(+). It catalyses the reaction lanosterol + reduced [NADPH--hemoprotein reductase] + O2 = 32-hydroxylanosterol + oxidized [NADPH--hemoprotein reductase] + H2O + H(+). The enzyme catalyses 32-hydroxylanosterol + reduced [NADPH--hemoprotein reductase] + O2 = 32-oxolanosterol + oxidized [NADPH--hemoprotein reductase] + 2 H2O + H(+). The catalysed reaction is 32-oxolanosterol + reduced [NADPH--hemoprotein reductase] + O2 = 4,4-dimethyl-5alpha-cholesta-8,14,24-trien-3beta-ol + formate + oxidized [NADPH--hemoprotein reductase] + H2O + 2 H(+). It carries out the reaction eburicol + 3 reduced [NADPH--hemoprotein reductase] + 3 O2 = 14-demethyleburicol + formate + 3 oxidized [NADPH--hemoprotein reductase] + 4 H2O + 4 H(+). It catalyses the reaction eburicol + reduced [NADPH--hemoprotein reductase] + O2 = 32-hydroxyeburicol + oxidized [NADPH--hemoprotein reductase] + H2O + H(+). The enzyme catalyses 32-hydroxyeburicol + reduced [NADPH--hemoprotein reductase] + O2 = 32-oxoeburicol + oxidized [NADPH--hemoprotein reductase] + 2 H2O + H(+). The catalysed reaction is 32-oxoeburicol + reduced [NADPH--hemoprotein reductase] + O2 = 14-demethyleburicol + formate + oxidized [NADPH--hemoprotein reductase] + H2O + 2 H(+). It functions in the pathway steroid biosynthesis; sterol biosynthesis. Sterol 14-alpha demethylase; part of the gene cluster that mediates the biosynthesis of the tetrahydropyranyl antifungal agent restricticin that acts as an inhibitor of CYP51 and blocks the ergosterol biosynthesis. Sterol 14-alpha-demethylase plays a critical role in the biosynthesis of ergosterol, the major sterol component in fungal membranes that participates in a variety of functions. Rtsn2 acts as a self-resistant CYP51 that contains mutations found in CYP51s isolated from azole resistance strains and that is not inhibited by the final product of the cluster, restricticin. The sequence is that of Sterol 14-alpha demethylase rstn2 from Aspergillus nomiae NRRL (strain ATCC 15546 / NRRL 13137 / CBS 260.88 / M93).